The primary structure comprises 346 residues: Lysyl aminopeptidase (346 aa).

Zn(2+) is bound by residues histidine 63 and aspartate 177. Glutamate 207 (proton acceptor) is an active-site residue. 3 residues coordinate Zn(2+): glutamate 208, aspartate 230, and histidine 314.

Homotetramer. The cofactor is Zn(2+).

The catalysed reaction is Preferentially, release of N-terminal lysine.. In terms of biological role, hydrolyzes di-, tri- and tetrapeptides with a lysine as the N-terminal amino acid and with Gly, Lys, Ala, Phe or Glu in the second position. In Pyrococcus furiosus (strain ATCC 43587 / DSM 3638 / JCM 8422 / Vc1), this protein is Lysyl aminopeptidase.